A 151-amino-acid polypeptide reads, in one-letter code: uncharacterized protein (151 aa).

The interval 123–151 (PAGQNAGTGPAQKLKTDETRCYERRGGSQ) is disordered. Positions 136–151 (LKTDETRCYERRGGSQ) are enriched in basic and acidic residues.

This is an uncharacterized protein from Triticum aestivum (Wheat).